Reading from the N-terminus, the 68-residue chain is uncharacterized protein (68 aa).

The protein to B.subtilis XtrA.

This is an uncharacterized protein from Bacillus subtilis (strain 168).